Here is a 490-residue protein sequence, read N- to C-terminus: ATP synthase subunit beta, chloroplastic (490 aa).

Residue 170 to 177 (GGAGVGKT) participates in ATP binding.

Belongs to the ATPase alpha/beta chains family. In terms of assembly, F-type ATPases have 2 components, CF(1) - the catalytic core - and CF(0) - the membrane proton channel. CF(1) has five subunits: alpha(3), beta(3), gamma(1), delta(1), epsilon(1). CF(0) has four main subunits: a(1), b(1), b'(1) and c(9-12).

The protein resides in the plastid. Its subcellular location is the chloroplast thylakoid membrane. It catalyses the reaction ATP + H2O + 4 H(+)(in) = ADP + phosphate + 5 H(+)(out). Its function is as follows. Produces ATP from ADP in the presence of a proton gradient across the membrane. The catalytic sites are hosted primarily by the beta subunits. The chain is ATP synthase subunit beta, chloroplastic from Ipomoea obscura (Obscure morning glory).